A 447-amino-acid chain; its full sequence is Argininosuccinate synthase (447 aa).

ATP contacts are provided by residues 17–25 and Ala43; that span reads AFSGGLDTS. Position 99 (Tyr99) interacts with L-citrulline. The ATP site is built by Gly129 and Thr131. Positions 131, 135, and 136 each coordinate L-aspartate. Asn135 contacts L-citrulline. Asp136 provides a ligand contact to ATP. The L-citrulline site is built by Arg139 and Ser192. ATP is bound at residue Asp194. Thr201, Glu203, and Glu280 together coordinate L-citrulline.

The protein belongs to the argininosuccinate synthase family. Type 2 subfamily. Homotetramer.

It localises to the cytoplasm. The enzyme catalyses L-citrulline + L-aspartate + ATP = 2-(N(omega)-L-arginino)succinate + AMP + diphosphate + H(+). It functions in the pathway amino-acid biosynthesis; L-arginine biosynthesis; L-arginine from L-ornithine and carbamoyl phosphate: step 2/3. The polypeptide is Argininosuccinate synthase (Paracidovorax citrulli (strain AAC00-1) (Acidovorax citrulli)).